A 543-amino-acid polypeptide reads, in one-letter code: CTP synthase (543 aa).

An amidoligase domain region spans residues 1–265 (MTRYVFITGG…DREVLRHFGL (265 aa)). Residue S13 coordinates CTP. Residue S13 participates in UTP binding. 14-19 (SLGKGI) contacts ATP. L-glutamine is bound at residue Y54. D71 contacts ATP. Residues D71 and E139 each coordinate Mg(2+). Residues 146 to 148 (DIE), 186 to 191 (KTKPTQ), and K222 each bind CTP. UTP-binding positions include 186–191 (KTKPTQ) and K222. V240 lines the ATP pocket. Positions 291–542 (TIAVVGKYTN…IEAAVKQMRL (252 aa)) constitute a Glutamine amidotransferase type-1 domain. G353 is an L-glutamine binding site. C380 serves as the catalytic Nucleophile; for glutamine hydrolysis. L-glutamine-binding positions include 381–384 (FGMQ), E404, and R470. Catalysis depends on residues H515 and E517.

Belongs to the CTP synthase family. Homotetramer.

The catalysed reaction is UTP + L-glutamine + ATP + H2O = CTP + L-glutamate + ADP + phosphate + 2 H(+). The enzyme catalyses L-glutamine + H2O = L-glutamate + NH4(+). It carries out the reaction UTP + NH4(+) + ATP = CTP + ADP + phosphate + 2 H(+). It participates in pyrimidine metabolism; CTP biosynthesis via de novo pathway; CTP from UDP: step 2/2. Its activity is regulated as follows. Allosterically activated by GTP, when glutamine is the substrate; GTP has no effect on the reaction when ammonia is the substrate. The allosteric effector GTP functions by stabilizing the protein conformation that binds the tetrahedral intermediate(s) formed during glutamine hydrolysis. Inhibited by the product CTP, via allosteric rather than competitive inhibition. Catalyzes the ATP-dependent amination of UTP to CTP with either L-glutamine or ammonia as the source of nitrogen. Regulates intracellular CTP levels through interactions with the four ribonucleotide triphosphates. This is CTP synthase from Acidiphilium cryptum (strain JF-5).